Reading from the N-terminus, the 373-residue chain is Dual-specificity RNA methyltransferase RlmN (373 aa).

The active-site Proton acceptor is Glu-94. The region spanning 100 to 339 is the Radical SAM core domain; it reads EDDRATLCVS…VIVRKTRGDD (240 aa). Residues Cys-107 and Cys-344 are joined by a disulfide bond. Cys-114, Cys-118, and Cys-121 together coordinate [4Fe-4S] cluster. S-adenosyl-L-methionine contacts are provided by residues 168–169, Ser-200, 222–224, and Asn-301; these read GE and SIH. Cys-344 (S-methylcysteine intermediate) is an active-site residue.

The protein belongs to the radical SAM superfamily. RlmN family. [4Fe-4S] cluster serves as cofactor.

Its subcellular location is the cytoplasm. It carries out the reaction adenosine(2503) in 23S rRNA + 2 reduced [2Fe-2S]-[ferredoxin] + 2 S-adenosyl-L-methionine = 2-methyladenosine(2503) in 23S rRNA + 5'-deoxyadenosine + L-methionine + 2 oxidized [2Fe-2S]-[ferredoxin] + S-adenosyl-L-homocysteine. The enzyme catalyses adenosine(37) in tRNA + 2 reduced [2Fe-2S]-[ferredoxin] + 2 S-adenosyl-L-methionine = 2-methyladenosine(37) in tRNA + 5'-deoxyadenosine + L-methionine + 2 oxidized [2Fe-2S]-[ferredoxin] + S-adenosyl-L-homocysteine. Functionally, specifically methylates position 2 of adenine 2503 in 23S rRNA and position 2 of adenine 37 in tRNAs. m2A2503 modification seems to play a crucial role in the proofreading step occurring at the peptidyl transferase center and thus would serve to optimize ribosomal fidelity. The chain is Dual-specificity RNA methyltransferase RlmN from Shewanella woodyi (strain ATCC 51908 / MS32).